Here is a 286-residue protein sequence, read N- to C-terminus: Rhomboid-type serine protease 2 (286 aa).

Helical transmembrane passes span 18–38, 66–86, 99–119, 122–142, 164–183, and 188–210; these read ITQY…LLVI, SFYL…VGLF, VFTG…FCIV, LLYP…FMSF, VSIP…MVLI, and FWGH…KFLY. Serine 133 functions as the Nucleophile in the catalytic mechanism. Histidine 191 is a catalytic residue.

The protein belongs to the peptidase S54 family.

It is found in the golgi apparatus membrane. The protein resides in the golgi apparatus. It localises to the cis-Golgi network membrane. It catalyses the reaction Cleaves type-1 transmembrane domains using a catalytic dyad composed of serine and histidine that are contributed by different transmembrane domains.. Its function is as follows. Probable rhomboid-type serine protease that catalyzes intramembrane proteolysis. The polypeptide is Rhomboid-type serine protease 2 (RBD2) (Debaryomyces hansenii (strain ATCC 36239 / CBS 767 / BCRC 21394 / JCM 1990 / NBRC 0083 / IGC 2968) (Yeast)).